Consider the following 496-residue polypeptide: Probable CtpA-like serine protease (496 aa).

Residues 1-16 are compositionally biased toward basic and acidic residues; sequence MDDKQHTTSSDDERAE. The tract at residues 1 to 27 is disordered; that stretch reads MDDKQHTTSSDDERAENATSNQDQQTN. Residues 17–27 are compositionally biased toward polar residues; the sequence is NATSNQDQQTN. A helical membrane pass occupies residues 39–59; that stretch reads FISILIGTIIITAVITVVAYI. Residues 124 to 206 form the PDZ domain; it reads TKSFNEGVSG…TEVTLTVQRG (83 aa). Catalysis depends on charge relay system residues S329, D340, and K354.

This sequence belongs to the peptidase S41A family.

The protein localises to the cell membrane. The sequence is that of Probable CtpA-like serine protease from Staphylococcus aureus (strain MRSA252).